The sequence spans 435 residues: ATP-dependent protease ATPase subunit HslU (435 aa).

Residues isoleucine 18, 60 to 65 (GVGKTE), aspartate 248, glutamate 313, and arginine 385 each bind ATP.

Belongs to the ClpX chaperone family. HslU subfamily. In terms of assembly, a double ring-shaped homohexamer of HslV is capped on each side by a ring-shaped HslU homohexamer. The assembly of the HslU/HslV complex is dependent on binding of ATP.

It localises to the cytoplasm. Functionally, ATPase subunit of a proteasome-like degradation complex; this subunit has chaperone activity. The binding of ATP and its subsequent hydrolysis by HslU are essential for unfolding of protein substrates subsequently hydrolyzed by HslV. HslU recognizes the N-terminal part of its protein substrates and unfolds these before they are guided to HslV for hydrolysis. The polypeptide is ATP-dependent protease ATPase subunit HslU (Rhizobium johnstonii (strain DSM 114642 / LMG 32736 / 3841) (Rhizobium leguminosarum bv. viciae)).